Here is a 160-residue protein sequence, read N- to C-terminus: C-type lectin mosGCTL-1 (160 aa).

An N-terminal signal peptide occupies residues 1 to 20 (MLTKGITLILLLVLVHSSHG). Residues 23-140 (TPNRKFYIPS…YHWSWNDNTC (118 aa)) form the C-type lectin domain. Cystine bridges form between cysteine 44–cysteine 140 and cysteine 120–cysteine 140. Asparagine 76 carries N-linked (GlcNAc...) asparagine glycosylation.

In terms of assembly, interacts with putative receptor-type tyrosine-protein phosphatase mosPTP-1; the interaction probably mediates the recruitment of West Nile virus particles in complex with C-type lectin mosGCTL-1 to the cell surface. As to quaternary structure, (Microbial infection) Interacts with envelope protein E and virions of West Nile virus in a calcium-dependent manner. Female salivary gland (at protein level).

It is found in the secreted. Its function is as follows. Putative lectin. In terms of biological role, (Microbial infection) Facilitates West Nile virus infection in mosquitoes probably via capturing viral particles and presenting them to a ligand on the cell surface, thereby facilitating viral entry. This chain is C-type lectin mosGCTL-1, found in Aedes aegypti (Yellowfever mosquito).